A 169-amino-acid polypeptide reads, in one-letter code: E1B protein, small T-antigen (169 aa).

It belongs to the adenoviridae E1B 19 kDa protein family.

This chain is E1B protein, small T-antigen, found in Canine adenovirus serotype 1 (strain CLL) (CAdV-1).